A 286-amino-acid chain; its full sequence is Glycine--tRNA ligase alpha subunit (286 aa).

It belongs to the class-II aminoacyl-tRNA synthetase family. In terms of assembly, tetramer of two alpha and two beta subunits.

It is found in the cytoplasm. The catalysed reaction is tRNA(Gly) + glycine + ATP = glycyl-tRNA(Gly) + AMP + diphosphate. This chain is Glycine--tRNA ligase alpha subunit, found in Campylobacter lari (strain RM2100 / D67 / ATCC BAA-1060).